The sequence spans 285 residues: Putative ankyrin repeat protein R551 (285 aa).

4 ANK repeats span residues 99–129 (DLKS…PIKI), 157–186 (NDFD…LQDE), 188–214 (IGKI…EAFR), and 215–249 (SAPD…CIQQ).

The polypeptide is Putative ankyrin repeat protein R551 (Acanthamoeba polyphaga (Amoeba)).